Reading from the N-terminus, the 159-residue chain is Endoribonuclease YbeY (159 aa).

Zn(2+) contacts are provided by His-125, His-129, and His-135.

It belongs to the endoribonuclease YbeY family. Requires Zn(2+) as cofactor.

It localises to the cytoplasm. Functionally, single strand-specific metallo-endoribonuclease involved in late-stage 70S ribosome quality control and in maturation of the 3' terminus of the 16S rRNA. This is Endoribonuclease YbeY from Enterococcus faecalis (strain ATCC 700802 / V583).